The chain runs to 309 residues: Foldase protein PrsA 2 (309 aa).

Residues Met-1–Gly-20 form the signal peptide. Cys-21 carries N-palmitoyl cysteine lipidation. Cys-21 carries S-diacylglycerol cysteine lipidation. The PpiC domain occupies Met-137–Tyr-232.

It belongs to the PrsA family.

It localises to the cell membrane. The enzyme catalyses [protein]-peptidylproline (omega=180) = [protein]-peptidylproline (omega=0). Its function is as follows. Plays a major role in protein secretion by helping the post-translocational extracellular folding of several secreted proteins. The polypeptide is Foldase protein PrsA 2 (prsA2) (Lactiplantibacillus plantarum (strain ATCC BAA-793 / NCIMB 8826 / WCFS1) (Lactobacillus plantarum)).